Reading from the N-terminus, the 63-residue chain is Protein Wfdc21 (63 aa).

A signal peptide spans 1-24 (MKLGAFLLLVSLITLSLEVQELQA). Residues 25–63 (AVRPLQLLGTCAELCRGDWDCGPEEQCVSIGCSHICTTN) enclose the WAP; atypical domain. Intrachain disulfides connect Cys35-Cys56, Cys39-Cys51, and Cys45-Cys60.

Predominantly expressed in white adipose tissue and liver.

Its subcellular location is the secreted. Its function is as follows. May promote activation of the metalloproteinase MMP2. The polypeptide is Protein Wfdc21 (Mus musculus (Mouse)).